A 528-amino-acid chain; its full sequence is Probable methylmalonate-semialdehyde/malonate-semialdehyde dehydrogenase [acylating], mitochondrial (528 aa).

Residues 1-26 (MLSFKFAKSASKVIGNRNFHSSSASL) constitute a mitochondrion transit peptide. Phenylalanine 175, lysine 199, glutamate 202, and arginine 203 together coordinate NAD(+). Cysteine 307 acts as the Nucleophile in catalysis. Glutamate 408 lines the NAD(+) pocket.

Belongs to the aldehyde dehydrogenase family. In terms of assembly, homotetramer.

The protein resides in the mitochondrion. The enzyme catalyses 2-methyl-3-oxopropanoate + NAD(+) + CoA + H2O = propanoyl-CoA + hydrogencarbonate + NADH + H(+). It catalyses the reaction 3-oxopropanoate + NAD(+) + CoA + H2O = hydrogencarbonate + acetyl-CoA + NADH + H(+). Probable malonate and methylmalonate semialdehyde dehydrogenase involved in the catabolism of valine, thymine, and compounds catabolized by way of beta-alanine, including uracil and cytidine. The chain is Probable methylmalonate-semialdehyde/malonate-semialdehyde dehydrogenase [acylating], mitochondrial (mmsdh) from Dictyostelium discoideum (Social amoeba).